A 279-amino-acid chain; its full sequence is MAIEAFAPAKINLTLHVTGQRDDGYHLLDSLVVFADIGDTIRVSASDRVSLDIDGPEAGGLAAEPDNLVLRAARLLAPERGAAISLTKRLPVASGIGGGSADAAATLRALAQLWGLAAPSAEQALTLGADVPVCLFPVPARMQGIGDRLGPIPPLPAMDIVLVNPRVAVSTPAVFKSLIVKENAPMNPELPRWRDLPEFTCWLADQRNDLAEPAIAQQPVIADVLNALRDAGALFAGMSGSGATCFGLFPSDGHSAKSVAKAVLRLAHPGWWCAHGRVL.

Residue lysine 10 is part of the active site. 91–101 is an ATP binding site; the sequence is PVASGIGGGSA. The active site involves aspartate 130.

It belongs to the GHMP kinase family. IspE subfamily.

The catalysed reaction is 4-CDP-2-C-methyl-D-erythritol + ATP = 4-CDP-2-C-methyl-D-erythritol 2-phosphate + ADP + H(+). The protein operates within isoprenoid biosynthesis; isopentenyl diphosphate biosynthesis via DXP pathway; isopentenyl diphosphate from 1-deoxy-D-xylulose 5-phosphate: step 3/6. In terms of biological role, catalyzes the phosphorylation of the position 2 hydroxy group of 4-diphosphocytidyl-2C-methyl-D-erythritol. This Ruegeria pomeroyi (strain ATCC 700808 / DSM 15171 / DSS-3) (Silicibacter pomeroyi) protein is 4-diphosphocytidyl-2-C-methyl-D-erythritol kinase.